The following is a 90-amino-acid chain: Auxin-responsive protein SAUR19 (90 aa).

It belongs to the ARG7 family. As to quaternary structure, interacts with and inhibits PP2C-D subfamily of type 2C phosphatases such as PP2C67/PP2C-D1, PP2C64/PP2C-D5 and PP2C46/PP2C-D6.

It is found in the cell membrane. Functionally, provide a mechanistic link between auxin and plasma membrane H(+)-ATPases (PM H(+)-ATPases, e.g. AHA1 and AHA2), and triggers PM H(+)-ATPases activity by promoting phosphorylation of their C-terminal autoinhibitory domain as a result of PP2C-D subfamily of type 2C phosphatases inhibition, thus leading to the acidification of the apoplast and the facilitation of solutes and water uptake to drive cell expansion. Prevents the apical hook maintenance of etiolated seedlings. Functions as positive effectors of cell expansion through modulation of auxin transport. This chain is Auxin-responsive protein SAUR19, found in Arabidopsis thaliana (Mouse-ear cress).